The chain runs to 1374 residues: Serine/threonine-protein kinase LMTK1 (1374 aa).

The helical transmembrane segment at 32-52 threads the bilayer; it reads LAVVAVSFSGLFAVIVLMLAC. Positions 125-395 constitute a Protein kinase domain; that stretch reads LLYLKEIGRG…PTAEEVHLLL (271 aa). ATP-binding positions include 131 to 139 and K156; that span reads IGRGWFGKV. The Proton acceptor role is filled by D253. Position 495 is a phosphoserine (S495). 5 disordered regions span residues 542–622, 667–731, 765–1195, 1245–1302, and 1320–1374; these read GHDP…LAEG, VGAR…LLGL, WTET…PAVP, QESP…AWDD, and AAPA…SKEA. Residues 606-620 show a composition bias toward low complexity; sequence PSRSPSPSAGPLSLA. Positions 680–690 are enriched in polar residues; that stretch reads SNVSANNNSGS. Composition is skewed to low complexity over residues 719 to 731, 801 to 831, and 847 to 856; these read PEPG…LLGL, SPSQ…TPAT, and SSSSPEVEAP. Over residues 865 to 878 the composition is skewed to polar residues; sequence EATSGIFTDTSSDG. Residues 900–914 are compositionally biased toward low complexity; it reads PDSLDSLDIPSSASD. The span at 978 to 987 shows a compositional bias: polar residues; sequence RLSTSLSGLN. A Phosphoserine modification is found at S1029. The segment covering 1063-1073 has biased composition (polar residues); sequence EGSSPEPSTCP. The segment covering 1138–1155 has biased composition (low complexity); it reads TPRAPLRLALPGLPAALE. The span at 1158-1173 shows a compositional bias: acidic residues; that stretch reads PEEEEEDSEDSDESDE. Residues S1168, S1171, S1184, S1187, and S1262 each carry the phosphoserine modification. Polar residues predominate over residues 1272–1291; that stretch reads GSPSAPNRPQQADGSPNGST. Positions 1321–1332 are enriched in pro residues; sequence APAPAAPTPTPA. Residues 1337–1352 show a composition bias toward polar residues; that stretch reads FTVSPAPTSRFSITHV. The span at 1353-1363 shows a compositional bias: basic and acidic residues; that stretch reads SDSDAESKRGP. Residues 1365-1374 show a composition bias toward gly residues; the sequence is AGAGGESKEA.

This sequence belongs to the protein kinase superfamily. Tyr protein kinase family. Interacts with CDK5. Post-translationally, autophosphorylated. Phosphorylated by CDK5. Expressed in brain.

The protein localises to the membrane. The protein resides in the cytoplasm. It localises to the perinuclear region. The enzyme catalyses L-seryl-[protein] + ATP = O-phospho-L-seryl-[protein] + ADP + H(+). The catalysed reaction is L-threonyl-[protein] + ATP = O-phospho-L-threonyl-[protein] + ADP + H(+). Functionally, may be involved in neuronal differentiation. The sequence is that of Serine/threonine-protein kinase LMTK1 (AATK) from Homo sapiens (Human).